Reading from the N-terminus, the 390-residue chain is Probable tRNA pseudouridine synthase D (390 aa).

Catalysis depends on Asp93, which acts as the Nucleophile. Positions 166–353 (HVLNYFGIQR…YGTRRKLITP (188 aa)) constitute a TRUD domain.

This sequence belongs to the pseudouridine synthase TruD family.

The enzyme catalyses uridine(13) in tRNA = pseudouridine(13) in tRNA. Functionally, could be responsible for synthesis of pseudouridine from uracil-13 in transfer RNAs. The protein is Probable tRNA pseudouridine synthase D of Methanococcus vannielii (strain ATCC 35089 / DSM 1224 / JCM 13029 / OCM 148 / SB).